The sequence spans 384 residues: 1-deoxy-D-xylulose 5-phosphate reductoisomerase (384 aa).

NADPH-binding residues include Thr10, Gly11, Ser12, Ile13, Lys37, and Asn124. Residue Lys125 participates in 1-deoxy-D-xylulose 5-phosphate binding. Glu126 provides a ligand contact to NADPH. Asp150 provides a ligand contact to Mn(2+). 1-deoxy-D-xylulose 5-phosphate-binding residues include Ser151, Glu152, Ser176, and His199. Mn(2+) is bound at residue Glu152. Gly205 is a binding site for NADPH. 1-deoxy-D-xylulose 5-phosphate is bound by residues Ser212, Asn217, Lys218, and Glu221. Glu221 provides a ligand contact to Mn(2+).

Belongs to the DXR family. The cofactor is Mg(2+). Requires Mn(2+) as cofactor.

It catalyses the reaction 2-C-methyl-D-erythritol 4-phosphate + NADP(+) = 1-deoxy-D-xylulose 5-phosphate + NADPH + H(+). Its pathway is isoprenoid biosynthesis; isopentenyl diphosphate biosynthesis via DXP pathway; isopentenyl diphosphate from 1-deoxy-D-xylulose 5-phosphate: step 1/6. Catalyzes the NADPH-dependent rearrangement and reduction of 1-deoxy-D-xylulose-5-phosphate (DXP) to 2-C-methyl-D-erythritol 4-phosphate (MEP). The polypeptide is 1-deoxy-D-xylulose 5-phosphate reductoisomerase (Clostridium tetani (strain Massachusetts / E88)).